A 197-amino-acid polypeptide reads, in one-letter code: MEKEGLGLEITELRLGLPGRDVAEKMMKKRAFTEMNMTSSGSNSDQCESGVVSSGGDAEKVNDSPAAKSQVVGWPPVCSYRKKNSCKEASTTKVGLGYVKVSMDGVPYLRKMDLGSSQGYDDLAFALDKLFGFRGIGVALKDGDNCEYVTIYEDKDGDWMLAGDVPWGMFLESCKRLRIMKRSDATGFGLQPRGVDE.

The EAR-like (transcriptional repression) motif lies at 13–17 (LRLGL). The span at 35 to 47 (MNMTSSGSNSDQC) shows a compositional bias: polar residues. Positions 35 to 67 (MNMTSSGSNSDQCESGVVSSGGDAEKVNDSPAA) are disordered. The 89-residue stretch at 96-184 (LGYVKVSMDG…KRLRIMKRSD (89 aa)) folds into the PB1 domain.

It belongs to the Aux/IAA family. As to quaternary structure, homodimers and heterodimers. Interacts with the auxin response factor ARF7.

Its subcellular location is the nucleus. Functionally, aux/IAA proteins are short-lived transcriptional factors that function as repressors of early auxin response genes at low auxin concentrations. Repression is thought to result from the interaction with auxin response factors (ARFs), proteins that bind to the auxin-responsive promoter element (AuxRE). Formation of heterodimers with ARF proteins may alter their ability to modulate early auxin response genes expression. The polypeptide is Auxin-responsive protein IAA19 (IAA19) (Arabidopsis thaliana (Mouse-ear cress)).